Here is a 76-residue protein sequence, read N- to C-terminus: Acyl carrier protein (76 aa).

The 75-residue stretch at 1–75 (MVLEKIKTLM…DVVLYIEKNL (75 aa)) folds into the Carrier domain. Position 35 is an O-(pantetheine 4'-phosphoryl)serine (serine 35).

It belongs to the acyl carrier protein (ACP) family. 4'-phosphopantetheine is transferred from CoA to a specific serine of apo-ACP by AcpS. This modification is essential for activity because fatty acids are bound in thioester linkage to the sulfhydryl of the prosthetic group.

The protein localises to the cytoplasm. The protein operates within lipid metabolism; fatty acid biosynthesis. In terms of biological role, carrier of the growing fatty acid chain in fatty acid biosynthesis. The sequence is that of Acyl carrier protein from Phytoplasma australiense.